A 364-amino-acid polypeptide reads, in one-letter code: Probable tartrate dehydrogenase/decarboxylase TtuC (364 aa).

Aspartate 222, aspartate 246, and aspartate 250 together coordinate Mn(2+).

The protein belongs to the isocitrate and isopropylmalate dehydrogenases family. Requires Mg(2+) as cofactor. It depends on Mn(2+) as a cofactor. K(+) is required as a cofactor.

It localises to the cytoplasm. The enzyme catalyses tartrate + NAD(+) = 2-hydroxy-3-oxosuccinate + NADH + H(+). It catalyses the reaction (2R,3S)-tartrate + NAD(+) = 2-hydroxy-3-oxosuccinate + NADH + H(+). The catalysed reaction is (2R,3R)-tartrate + NAD(+) = 2-hydroxy-3-oxosuccinate + NADH + H(+). It carries out the reaction (2R,3R)-tartrate + H(+) = (R)-glycerate + CO2. The enzyme catalyses (R)-malate + NAD(+) = pyruvate + CO2 + NADH. It participates in carbohydrate acid metabolism; tartrate degradation; 2-hydroxy-3-oxosuccinate from L-tartrate: step 1/1. Its pathway is carbohydrate acid metabolism; tartrate degradation; 2-hydroxy-3-oxosuccinate from meso-tartrate: step 1/1. The protein operates within carbohydrate acid metabolism; tartrate degradation; D-glycerate from L-tartrate: step 1/1. In terms of biological role, has multiple catalytic activities. Apart from catalyzing the oxidation of (+)-tartrate to oxaloglycolate, also converts meso-tartrate to D-glycerate and catalyzes the oxidative decarboxylation of D-malate to pyruvate. In Agrobacterium vitis (Rhizobium vitis), this protein is Probable tartrate dehydrogenase/decarboxylase TtuC (ttuC).